A 103-amino-acid polypeptide reads, in one-letter code: Small ribosomal subunit protein uS10 (103 aa).

It belongs to the universal ribosomal protein uS10 family. Part of the 30S ribosomal subunit.

Functionally, involved in the binding of tRNA to the ribosomes. The chain is Small ribosomal subunit protein uS10 from Salinibacter ruber (strain DSM 13855 / M31).